A 265-amino-acid polypeptide reads, in one-letter code: Energy-coupling factor transporter transmembrane protein EcfT (265 aa).

6 consecutive transmembrane segments (helical) span residues 26–46 (MVFVFIMMILIFLMNNWQTYA), 47–67 (VGIILIFIILKASNLSFMFLF), 72–92 (PILFLLIFTLLMHIFLTKGGA), 107–127 (VIMGIMISLRFILIIFLTTIM), 152–172 (LPVHELALMMSIALRFIPTLM), and 243–263 (HTYDTLSLLTLIPITLLILYL).

This sequence belongs to the energy-coupling factor EcfT family. In terms of assembly, forms a stable energy-coupling factor (ECF) transporter complex composed of 2 membrane-embedded substrate-binding proteins (S component), 2 ATP-binding proteins (A component) and 2 transmembrane proteins (T component). May be able to interact with more than 1 S component at a time.

It is found in the cell membrane. Functionally, transmembrane (T) component of an energy-coupling factor (ECF) ABC-transporter complex. Unlike classic ABC transporters this ECF transporter provides the energy necessary to transport a number of different substrates. The polypeptide is Energy-coupling factor transporter transmembrane protein EcfT (Macrococcus caseolyticus (strain JCSC5402) (Macrococcoides caseolyticum)).